The chain runs to 932 residues: Protocadherin gamma-A12 (932 aa).

Positions 1-29 (MIPARLHRDYKGLVLLGILLGTLWETGCT) are cleaved as a signal peptide. 6 consecutive Cadherin domains span residues 30-133 (QIRY…APYF), 134-242 (RESE…APAF), 243-347 (AQPE…APEV), 348-452 (VLTS…PPVF), 453-562 (PQAS…APEI), and 570-683 (DGST…SPAN). Topologically, residues 30 to 692 (QIRYSVPEEL…NSETSDLTLY (663 aa)) are extracellular. Residues asparagine 265, asparagine 419, and asparagine 545 are each glycosylated (N-linked (GlcNAc...) asparagine). The helical transmembrane segment at 693 to 713 (LVVAVAAVSCVFLAFVILLLA) threads the bilayer. Topologically, residues 714-932 (LRLRRWHKSR…KKKSGKKEKK (219 aa)) are cytoplasmic. Disordered regions lie at residues 803–841 (GHGL…WPNN) and 902–932 (ATLT…KEKK). The span at 816-841 (WRFSQAQRPGTSGSQNGDDTGTWPNN) shows a compositional bias: polar residues. Positions 922–932 (NKKKSGKKEKK) are enriched in basic residues.

It localises to the cell membrane. Functionally, potential calcium-dependent cell-adhesion protein. May be involved in the establishment and maintenance of specific neuronal connections in the brain. In Pan troglodytes (Chimpanzee), this protein is Protocadherin gamma-A12 (PCDHGA12).